The chain runs to 445 residues: Proline--tRNA ligase (445 aa).

Belongs to the class-II aminoacyl-tRNA synthetase family. ProS type 2 subfamily. As to quaternary structure, homodimer.

It localises to the cytoplasm. The enzyme catalyses tRNA(Pro) + L-proline + ATP = L-prolyl-tRNA(Pro) + AMP + diphosphate. Catalyzes the attachment of proline to tRNA(Pro) in a two-step reaction: proline is first activated by ATP to form Pro-AMP and then transferred to the acceptor end of tRNA(Pro). The sequence is that of Proline--tRNA ligase from Cereibacter sphaeroides (strain ATCC 17025 / ATH 2.4.3) (Rhodobacter sphaeroides).